We begin with the raw amino-acid sequence, 447 residues long: Cobyrinate a,c-diamide synthase (447 aa).

The GATase cobBQ-type domain maps to 252–439; the sequence is KIAVAFDESF…AHQHCIGNPY (188 aa). The Nucleophile role is filled by Cys-331.

Belongs to the CobB/CbiA family. It depends on Mg(2+) as a cofactor.

It carries out the reaction cob(II)yrinate + 2 L-glutamine + 2 ATP + 2 H2O = cob(II)yrinate a,c diamide + 2 L-glutamate + 2 ADP + 2 phosphate + 2 H(+). The enzyme catalyses Ni-sirohydrochlorin + 2 L-glutamine + 2 ATP + 2 H2O = Ni-sirohydrochlorin a,c-diamide + 2 L-glutamate + 2 ADP + 2 phosphate + 2 H(+). It functions in the pathway cofactor biosynthesis; adenosylcobalamin biosynthesis; cob(II)yrinate a,c-diamide from sirohydrochlorin (anaerobic route): step 10/10. Catalyzes the ATP-dependent amidation of the two carboxylate groups at positions a and c of cobyrinate, using either L-glutamine or ammonia as the nitrogen source. Involved in the biosynthesis of the unique nickel-containing tetrapyrrole coenzyme F430, the prosthetic group of methyl-coenzyme M reductase (MCR), which plays a key role in methanogenesis and anaerobic methane oxidation. Catalyzes the ATP-dependent amidation of the two carboxylate groups at positions a and c of Ni-sirohydrochlorin, using L-glutamine or ammonia as the nitrogen source. The sequence is that of Cobyrinate a,c-diamide synthase from Methanococcus maripaludis (strain C7 / ATCC BAA-1331).